Here is a 384-residue protein sequence, read N- to C-terminus: Urea transporter 1 (384 aa).

Glu-39 is subject to Phosphoserine. The next 5 membrane-spanning stretches (helical) occupy residues 61–81, 85–105, 111–131, 138–158, and 168–188; these read ISQVVFVSNPISGILILVGLL, PWWALCGCVGTVVSTLTALLL, AIAAGLQGYNATLVGILMAVF, FWWLIFPVSAMSMTCPVFSSA, and LPVFTLPFNMALSMYLSATGH. Asn-206 is a glycosylation site (N-linked (GlcNAc...) asparagine). Helical transmembrane passes span 250–270, 276–296, 305–325, and 327–347; these read LMCLHAAIGSLLGVIAGLSLA, IYFGLWGFNSSLACIAIGGMF, LLALACALFTAYFGACMAHLM, and VVHLPACTWSFCLATLLFLLL.

It belongs to the urea transporter family. In terms of assembly, homotrimer; each subunit contains a pore through which urea permeates. Identified in a complex with STOM. Post-translationally, N-glycosylated in red blood cells, as well as in most non-erythroid tissues, except in the gastrocnemius muscle and in the gastrointestinal tract, including liver, colon and stomach. In terms of tissue distribution, expressed in brain, kidney, heart, liver, lung, skeletal muscle, spleen, testis, ureter and urinary bladder (at protein level). Along the gastrointestinal tract, detected in colon, jejunum and stomach (at protein level). In the kidney, expressed in some microvessels of the inner and outer medulla, but not all (at protein level). Not detected in the cortex (at protein level). Detected in the urothelium all along the urinary tract, including the papilla surface, the ureter, the bladder and the urethra (at protein level). In the brain, expressed at the border of the corpus callosum and striatum in astrocytic cellular processes surrounding blood microvessels (at protein level). Detected in erythrocytes (at protein level).

The protein localises to the cell membrane. It is found in the basolateral cell membrane. It catalyses the reaction urea(in) = urea(out). In terms of biological role, mediates the transport of urea driven by a concentration gradient across the cell membranes of erythrocytes and the renal inner medullary collecting duct which is critical to the urinary concentrating mechanism. Facilitates water transport in erythrocytes. The protein is Urea transporter 1 (Slc14a1) of Mus musculus (Mouse).